The primary structure comprises 146 residues: Cytochrome c-type biogenesis protein CcmE (146 aa).

The Cytoplasmic portion of the chain corresponds to 1-7; that stretch reads MQAKHQR. Residues 8–28 form a helical; Signal-anchor for type II membrane protein membrane-spanning segment; sequence LILGIIALAAVIAAGFLALVA. Residues 29-146 lie on the Periplasmic side of the membrane; sequence FKKQAAYFFT…AATQTTLQEK (118 aa). Residues His-123 and Tyr-127 each contribute to the heme site.

It belongs to the CcmE/CycJ family.

The protein localises to the cell inner membrane. Heme chaperone required for the biogenesis of c-type cytochromes. Transiently binds heme delivered by CcmC and transfers the heme to apo-cytochromes in a process facilitated by CcmF and CcmH. The sequence is that of Cytochrome c-type biogenesis protein CcmE from Zymomonas mobilis subsp. mobilis (strain ATCC 31821 / ZM4 / CP4).